The sequence spans 137 residues: Acidic phospholipase A2 PL-II (137 aa).

Positions 1–17 (AVCVSLLGASSIRPLPL) are cleaved as a signal peptide. Disulfide bonds link Cys28–Cys89, Cys44–Cys136, Cys46–Cys62, Cys61–Cys117, Cys68–Cys110, Cys78–Cys103, and Cys96–Cys108. Tyr45, Gly47, and Gly49 together coordinate Ca(2+). His65 is a catalytic residue. Asp66 contacts Ca(2+). Residue Asp111 is part of the active site.

Ca(2+) is required as a cofactor. In terms of tissue distribution, expressed by the venom gland.

The protein localises to the secreted. It catalyses the reaction a 1,2-diacyl-sn-glycero-3-phosphocholine + H2O = a 1-acyl-sn-glycero-3-phosphocholine + a fatty acid + H(+). In terms of biological role, snake venom phospholipase A2 (PLA2) that may act in the hemostasis system of the prey. Exhibits hydrolytic activities, and prefers the anionic micelles (dPPC with deoxycholate) (54 umol/mg/min) to the zwitterionic micelles (dPPC with Triton X-100) (15 umol/mg/min). PLA2 catalyzes the calcium-dependent hydrolysis of the 2-acyl groups in 3-sn-phosphoglycerides. This is Acidic phospholipase A2 PL-II from Walterinnesia aegyptia (Desert black snake).